Here is a 1036-residue protein sequence, read N- to C-terminus: Isoleucine--tRNA ligase (1036 aa).

Residues 48-58 (PTANGKPHVGH) carry the 'HIGH' region motif. The 'KMSKS' region motif lies at 590-594 (KMSKS). Lys-593 serves as a coordination point for ATP.

Belongs to the class-I aminoacyl-tRNA synthetase family. IleS type 2 subfamily. In terms of assembly, monomer. It depends on Zn(2+) as a cofactor.

It is found in the cytoplasm. It carries out the reaction tRNA(Ile) + L-isoleucine + ATP = L-isoleucyl-tRNA(Ile) + AMP + diphosphate. Functionally, catalyzes the attachment of isoleucine to tRNA(Ile). As IleRS can inadvertently accommodate and process structurally similar amino acids such as valine, to avoid such errors it has two additional distinct tRNA(Ile)-dependent editing activities. One activity is designated as 'pretransfer' editing and involves the hydrolysis of activated Val-AMP. The other activity is designated 'posttransfer' editing and involves deacylation of mischarged Val-tRNA(Ile). This Clostridium tetani (strain Massachusetts / E88) protein is Isoleucine--tRNA ligase.